Consider the following 539-residue polypeptide: CTP synthase (539 aa).

The amidoligase domain stretch occupies residues 1–268 (MSFKSIFLTG…SDFLLNKLGF (268 aa)). S14 serves as a coordination point for CTP. Residue S14 coordinates UTP. 15–20 (SLGKGL) is a binding site for ATP. Y55 lines the L-glutamine pocket. Residue D72 participates in ATP binding. Positions 72 and 142 each coordinate Mg(2+). Residues 149–151 (DIE), 188–193 (KTKPTQ), and K224 each bind CTP. Residues 188-193 (KTKPTQ) and K224 each bind UTP. L242 contacts ATP. The Glutamine amidotransferase type-1 domain maps to 294–532 (RIGLVGKYLE…IRAAKAYSLE (239 aa)). Residue G353 coordinates L-glutamine. Residue C380 is the Nucleophile; for glutamine hydrolysis of the active site. L-glutamine-binding positions include 381–384 (LGMQ), E404, and R460. Residues H505 and E507 contribute to the active site.

The protein belongs to the CTP synthase family. As to quaternary structure, homotetramer.

The enzyme catalyses UTP + L-glutamine + ATP + H2O = CTP + L-glutamate + ADP + phosphate + 2 H(+). The catalysed reaction is L-glutamine + H2O = L-glutamate + NH4(+). It catalyses the reaction UTP + NH4(+) + ATP = CTP + ADP + phosphate + 2 H(+). It participates in pyrimidine metabolism; CTP biosynthesis via de novo pathway; CTP from UDP: step 2/2. Allosterically activated by GTP, when glutamine is the substrate; GTP has no effect on the reaction when ammonia is the substrate. The allosteric effector GTP functions by stabilizing the protein conformation that binds the tetrahedral intermediate(s) formed during glutamine hydrolysis. Inhibited by the product CTP, via allosteric rather than competitive inhibition. Its function is as follows. Catalyzes the ATP-dependent amination of UTP to CTP with either L-glutamine or ammonia as the source of nitrogen. May be involved in lipopolysaccharide biosynthesis, potentially channelling CTP directly to CMP-KDO synthetase. Regulates intracellular CTP levels through interactions with the four ribonucleotide triphosphates. The chain is CTP synthase from Chlamydia trachomatis serovar D (strain ATCC VR-885 / DSM 19411 / UW-3/Cx).